Here is a 407-residue protein sequence, read N- to C-terminus: Protein ATC1/LIC4 (407 aa).

The protein resides in the cytoplasm. It localises to the nucleus. Involved in cation homeostasis and in the regulation of the cation stress signaling cascades. The polypeptide is Protein ATC1/LIC4 (ATC1) (Eremothecium gossypii (strain ATCC 10895 / CBS 109.51 / FGSC 9923 / NRRL Y-1056) (Yeast)).